A 311-amino-acid polypeptide reads, in one-letter code: Aspartate carbamoyltransferase catalytic subunit (311 aa).

Arg-55 and Thr-56 together coordinate carbamoyl phosphate. L-aspartate is bound at residue Lys-85. Positions 106, 135, and 138 each coordinate carbamoyl phosphate. Arg-168 and Arg-230 together coordinate L-aspartate. 2 residues coordinate carbamoyl phosphate: Leu-268 and Pro-269.

Belongs to the aspartate/ornithine carbamoyltransferase superfamily. ATCase family. In terms of assembly, heterododecamer (2C3:3R2) of six catalytic PyrB chains organized as two trimers (C3), and six regulatory PyrI chains organized as three dimers (R2).

It carries out the reaction carbamoyl phosphate + L-aspartate = N-carbamoyl-L-aspartate + phosphate + H(+). The protein operates within pyrimidine metabolism; UMP biosynthesis via de novo pathway; (S)-dihydroorotate from bicarbonate: step 2/3. Its function is as follows. Catalyzes the condensation of carbamoyl phosphate and aspartate to form carbamoyl aspartate and inorganic phosphate, the committed step in the de novo pyrimidine nucleotide biosynthesis pathway. The protein is Aspartate carbamoyltransferase catalytic subunit of Pectobacterium carotovorum subsp. carotovorum (strain PC1).